A 309-amino-acid chain; its full sequence is MANSLYQKHIISIPELSRQELELIVETAGKIKKEPQPDLLKNKIVASCFFEASTRTRLSFETAIQRLGGSVIGFDTAGNTSLAQKGETLADSVQIITSYADAYVMRHPQEGAARLASEFSNGTPVINAGDGANQHPTQTLLDLYTIYETQGRLDNLNVAFVGDLKYGRTVHSLTQALAKFEGIKFFFIAPEVLAMPDYICEELDELGIEYQLVESMDDAIPELDILYMTRVQKERFDESEYAHIKSAYILSAENLQPARENLKVLHPLPRVDEIDTDVDATPHAYYFQQAENGVYARQALLALVLNETL.

Residues Arg55 and Thr56 each coordinate carbamoyl phosphate. Lys85 is a binding site for L-aspartate. Residues Arg106, His135, and Gln138 each coordinate carbamoyl phosphate. 2 residues coordinate L-aspartate: Arg168 and Arg230. Carbamoyl phosphate is bound by residues Leu268 and Pro269.

Belongs to the aspartate/ornithine carbamoyltransferase superfamily. ATCase family. In terms of assembly, heterododecamer (2C3:3R2) of six catalytic PyrB chains organized as two trimers (C3), and six regulatory PyrI chains organized as three dimers (R2).

The enzyme catalyses carbamoyl phosphate + L-aspartate = N-carbamoyl-L-aspartate + phosphate + H(+). The protein operates within pyrimidine metabolism; UMP biosynthesis via de novo pathway; (S)-dihydroorotate from bicarbonate: step 2/3. Functionally, catalyzes the condensation of carbamoyl phosphate and aspartate to form carbamoyl aspartate and inorganic phosphate, the committed step in the de novo pyrimidine nucleotide biosynthesis pathway. This Aliivibrio fischeri (strain MJ11) (Vibrio fischeri) protein is Aspartate carbamoyltransferase catalytic subunit.